The sequence spans 921 residues: Isoleucine--tRNA ligase (921 aa).

The 'HIGH' region motif lies at 59–69; it reads PYANGHLHIGH. Position 569 (glutamate 569) interacts with L-isoleucyl-5'-AMP. Residues 610–614 carry the 'KMSKS' region motif; sequence KMSKS. Lysine 613 serves as a coordination point for ATP. Zn(2+) is bound by residues cysteine 896, cysteine 899, cysteine 911, and cysteine 914.

This sequence belongs to the class-I aminoacyl-tRNA synthetase family. IleS type 1 subfamily. Monomer. The cofactor is Zn(2+).

It localises to the cytoplasm. It carries out the reaction tRNA(Ile) + L-isoleucine + ATP = L-isoleucyl-tRNA(Ile) + AMP + diphosphate. Catalyzes the attachment of isoleucine to tRNA(Ile). As IleRS can inadvertently accommodate and process structurally similar amino acids such as valine, to avoid such errors it has two additional distinct tRNA(Ile)-dependent editing activities. One activity is designated as 'pretransfer' editing and involves the hydrolysis of activated Val-AMP. The other activity is designated 'posttransfer' editing and involves deacylation of mischarged Val-tRNA(Ile). The protein is Isoleucine--tRNA ligase of Campylobacter hominis (strain ATCC BAA-381 / DSM 21671 / CCUG 45161 / LMG 19568 / NCTC 13146 / CH001A).